The chain runs to 104 residues: uncharacterized protein (104 aa).

This is an uncharacterized protein from Invertebrate iridescent virus 3 (IIV-3).